Consider the following 100-residue polypeptide: Urease subunit gamma (100 aa).

It belongs to the urease gamma subunit family. As to quaternary structure, heterotrimer of UreA (gamma), UreB (beta) and UreC (alpha) subunits. Three heterotrimers associate to form the active enzyme.

It is found in the cytoplasm. It carries out the reaction urea + 2 H2O + H(+) = hydrogencarbonate + 2 NH4(+). The protein operates within nitrogen metabolism; urea degradation; CO(2) and NH(3) from urea (urease route): step 1/1. In Aliivibrio fischeri (strain ATCC 700601 / ES114) (Vibrio fischeri), this protein is Urease subunit gamma.